A 94-amino-acid chain; its full sequence is Conotoxin Gla-MrII (94 aa).

The first 25 residues, 1-25, serve as a signal peptide directing secretion; sequence MFGHTSVSFLLLSIVALGMVATVIC. Residues E30, E34, E37, E40, and E41 each carry the 4-carboxyglutamate modification. The propeptide occupies 78–94; that stretch reads STHMQKRFLRMPRDLAD.

It belongs to the conotoxin I2 superfamily. In terms of processing, contains 4 disulfide bonds. In terms of tissue distribution, expressed by the venom duct.

It is found in the secreted. This chain is Conotoxin Gla-MrII, found in Conus marmoreus (Marble cone).